An 86-amino-acid chain; its full sequence is U15-lycotoxin-Ls1d (86 aa).

The first 20 residues, 1 to 20 (MNSKIFAVLLLLAFLSCVLS), serve as a signal peptide directing secretion. The WAP domain occupies 21–66 (DQYCPKSSITACKKMNIRNDCCKDDDCTGGSWCCATPCGNFCKYPT). 5 disulfides stabilise this stretch: Cys-24–Cys-54, Cys-32–Cys-58, Cys-41–Cys-53, Cys-42–Cys-80, and Cys-47–Cys-62.

It belongs to the venom protein 11 family. 01 (wap-1) subfamily. In terms of processing, contains 5 disulfide bonds. Expressed by the venom gland.

Its subcellular location is the secreted. In terms of biological role, has antibacterial activity. This Lycosa singoriensis (Wolf spider) protein is U15-lycotoxin-Ls1d.